The chain runs to 447 residues: ATP-dependent protease ATPase subunit HslU (447 aa).

ATP is bound by residues Ile-17 and 59–64; that span reads GVGKTE. The interval 136–160 is disordered; it reads PPARGGFQGEPTAEEKPTEKKESAT. Over residues 148–159 the composition is skewed to basic and acidic residues; sequence AEEKPTEKKESA. The ATP site is built by Asp-260, Glu-325, and Arg-397.

Belongs to the ClpX chaperone family. HslU subfamily. As to quaternary structure, a double ring-shaped homohexamer of HslV is capped on each side by a ring-shaped HslU homohexamer. The assembly of the HslU/HslV complex is dependent on binding of ATP.

The protein resides in the cytoplasm. Functionally, ATPase subunit of a proteasome-like degradation complex; this subunit has chaperone activity. The binding of ATP and its subsequent hydrolysis by HslU are essential for unfolding of protein substrates subsequently hydrolyzed by HslV. HslU recognizes the N-terminal part of its protein substrates and unfolds these before they are guided to HslV for hydrolysis. In Coxiella burnetii (strain Dugway 5J108-111), this protein is ATP-dependent protease ATPase subunit HslU.